The following is a 523-amino-acid chain: Peptidyl-prolyl cis-trans isomerase 4 (523 aa).

The region spanning 38–111 (KRLPINHCSL…GKFRCPVTFR (74 aa)) is the U-box domain. The PPIase cyclophilin-type domain occupies 278 to 433 (KNAFVRLVTN…VSVVIMRAEV (156 aa)).

Belongs to the cyclophilin-type PPIase family. PPIL2 subfamily. In terms of assembly, interacts with mep-1. Exclusively in the larval body wall striated muscle cells.

The protein localises to the nucleus. The enzyme catalyses [protein]-peptidylproline (omega=180) = [protein]-peptidylproline (omega=0). It catalyses the reaction S-ubiquitinyl-[E2 ubiquitin-conjugating enzyme]-L-cysteine + [acceptor protein]-L-lysine = [E2 ubiquitin-conjugating enzyme]-L-cysteine + N(6)-ubiquitinyl-[acceptor protein]-L-lysine.. It functions in the pathway protein modification; protein ubiquitination. Functionally, may catalyze the cis-trans isomerization of proline imidic peptide bonds in oligopeptides thereby assisting the folding of proteins. May also function as a chaperone, playing a role in intracellular transport of proteins. May also have a protein ubiquitin ligase activity acting as an E3 ubiquitin protein ligase or as a ubiquitin-ubiquitin ligase promoting elongation of ubiquitin chains on proteins. Influences the hermaphrodite switch from spermatogenesis to oogenesis. Required for body wall muscle cell development. The chain is Peptidyl-prolyl cis-trans isomerase 4 (cyn-4) from Caenorhabditis elegans.